The sequence spans 674 residues: Alpha-L-arabinofuranosidase 2 (674 aa).

The first 24 residues, 1–24 (MDMETSWRFLRSVCLLSFILGSFS), serve as a signal peptide directing secretion. Residues Asn48, Asn180, Asn199, Asn210, Asn361, Asn522, and Asn548 are each glycosylated (N-linked (GlcNAc...) asparagine).

It belongs to the glycosyl hydrolase 51 family. As to expression, high expression in flowers, siliques and stems. Observed in the vasculature of older root tissue, at the tip of anthers and in the petal blade of fully developed flowers, in floral abscission zones and in silique replum tissue. Expressed in the cambium and phloem, but not in the xylem or in the vascular system of floral tissues.

The protein localises to the secreted. It localises to the extracellular space. It is found in the extracellular matrix. The catalysed reaction is Hydrolysis of terminal non-reducing alpha-L-arabinofuranoside residues in alpha-L-arabinosides.. May be involved in the coordinated dissolution of the cell wall matrix during abscission and in the secondary cell wall formation in xylem vessels. This Arabidopsis thaliana (Mouse-ear cress) protein is Alpha-L-arabinofuranosidase 2 (ASD2).